Consider the following 207-residue polypeptide: Serotype 2 fimbrial subunit (207 aa).

The first 26 residues, 1–26 (MQIPFQRALRLCLRAALAAIASAAHA), serve as a signal peptide directing secretion. Cysteine 42 and cysteine 85 are oxidised to a cystine.

This sequence belongs to the fimbrial protein family.

It is found in the fimbrium. In terms of biological role, bordetella pertussis is the causative agent of whooping cough. An essential step in the disease process is the attachment of the bacteria to the ciliated epithelium of the respiratory tract, enabling the organism to resist normal host-clearance mechanisms. It is unclear which bacterial cell surface component are responsible for adherence but the fimbriae of B.pertussis are prime candidates for being involved in this process. The sequence is that of Serotype 2 fimbrial subunit (fim2) from Bordetella pertussis (strain Tohama I / ATCC BAA-589 / NCTC 13251).